A 386-amino-acid polypeptide reads, in one-letter code: 2,3-diketo-5-methylthiopentyl-1-phosphate enolase (386 aa).

The active-site Proton acceptor is lysine 85. Residues lysine 131, lysine 157–glutamate 160, histidine 248, glycine 316, and glycine 338–threonine 339 each bind substrate. Mg(2+) contacts are provided by lysine 157, aspartate 159, and glutamate 160. At lysine 157 the chain carries N6-carboxylysine.

Belongs to the RuBisCO large chain family. Type IV subfamily. Homodimer. The cofactor is Mg(2+).

The enzyme catalyses 5-methylsulfanyl-2,3-dioxopentyl phosphate = 2-hydroxy-5-methylsulfanyl-3-oxopent-1-enyl phosphate. Its pathway is amino-acid biosynthesis; L-methionine biosynthesis via salvage pathway; L-methionine from S-methyl-5-thio-alpha-D-ribose 1-phosphate: step 3/6. Functionally, catalyzes the enolization of 2,3-diketo-5-methylthiopentyl-1-phosphate (DK-MTP-1-P) into 2-hydroxy-3-keto-5-methylthiopentenyl-1-phosphate (HK-MTPenyl-1-P). The polypeptide is 2,3-diketo-5-methylthiopentyl-1-phosphate enolase (Microcystis aeruginosa (strain NIES-843 / IAM M-2473)).